Consider the following 196-residue polypeptide: ATP-dependent Clp protease proteolytic subunit (196 aa).

Ser-98 (nucleophile) is an active-site residue. His-123 is an active-site residue.

The protein belongs to the peptidase S14 family. In terms of assembly, fourteen ClpP subunits assemble into 2 heptameric rings which stack back to back to give a disk-like structure with a central cavity, resembling the structure of eukaryotic proteasomes.

It is found in the cytoplasm. The catalysed reaction is Hydrolysis of proteins to small peptides in the presence of ATP and magnesium. alpha-casein is the usual test substrate. In the absence of ATP, only oligopeptides shorter than five residues are hydrolyzed (such as succinyl-Leu-Tyr-|-NHMec, and Leu-Tyr-Leu-|-Tyr-Trp, in which cleavage of the -Tyr-|-Leu- and -Tyr-|-Trp bonds also occurs).. In terms of biological role, cleaves peptides in various proteins in a process that requires ATP hydrolysis. Has a chymotrypsin-like activity. Plays a major role in the degradation of misfolded proteins. This Actinobacillus pleuropneumoniae serotype 5b (strain L20) protein is ATP-dependent Clp protease proteolytic subunit.